Here is a 575-residue protein sequence, read N- to C-terminus: Alpha-(1,6)-fucosyltransferase (575 aa).

Residues 1–9 are Cytoplasmic-facing; it reads MRAWTGSWR. Residues 10–30 traverse the membrane as a helical; Signal-anchor for type II membrane protein segment; that stretch reads WIMLILFAWGTLLFYIGGHLV. At 31-575 the chain is on the lumenal side; the sequence is RDNDHPDHSS…KYPTYPEAEK (545 aa). Intrachain disulfides connect cysteine 204/cysteine 266, cysteine 212/cysteine 230, and cysteine 218/cysteine 222. One can recognise a GT23 domain in the interval 206-493; it reads KARKLVCNIN…PDASANFHSL (288 aa). Serine 278 bears the Phosphoserine mark. The SH3-binding signature appears at 299–305; that stretch reads PRPPYLP. The important for donor substrate binding stretch occupies residues 365 to 366; sequence RR. Cysteines 465 and 472 form a disulfide. The SH3 domain maps to 502-563; the sequence is QNAHNQIAVY…PSYKVREKIE (62 aa).

The protein belongs to the glycosyltransferase 23 family. Post-translationally, tyrosine phosphorylated by PKDCC/VLK.

It is found in the golgi apparatus. The protein localises to the golgi stack membrane. The enzyme catalyses N(4)-{beta-D-GlcNAc-(1-&gt;2)-alpha-D-Man-(1-&gt;3)-[beta-D-GlcNAc-(1-&gt;2)-alpha-D-Man-(1-&gt;6)]-beta-D-Man-(1-&gt;4)-beta-D-GlcNAc-(1-&gt;4)-beta-D-GlcNAc}-L-asparaginyl-[protein] + GDP-beta-L-fucose = an N(4)-{beta-D-GlcNAc-(1-&gt;2)-alpha-D-Man-(1-&gt;3)-[beta-D-GlcNAc-(1-&gt;2)-alpha-D-Man-(1-&gt;6)]-beta-D-Man-(1-&gt;4)-beta-D-GlcNAc-(1-&gt;4)-[alpha-L-Fuc-(1-&gt;6)]-beta-D-GlcNAc}-L-asparaginyl-[protein] + GDP + H(+). The protein operates within protein modification; protein glycosylation. In terms of biological role, catalyzes the addition of fucose in alpha 1-6 linkage to the first GlcNAc residue, next to the peptide chains in N-glycans. This Rattus norvegicus (Rat) protein is Alpha-(1,6)-fucosyltransferase (Fut8).